We begin with the raw amino-acid sequence, 324 residues long: IDS-like terpene synthase 3 (324 aa).

Positions 77 and 81 each coordinate Mg(2+).

Belongs to the FPP/GGPP synthase family. Requires Mg(2+) as cofactor.

It carries out the reaction (2E)-geranyl diphosphate + H2O = linalool + diphosphate. The enzyme catalyses (2E,6E)-farnesyl diphosphate + H2O = (6E)-nerolidol + diphosphate. In terms of biological role, terpene synthase that shows monoterpene synthase activity and produces linalool, using geranyl diphosphate (GPP) as substrate. Also shows sesquiterpene synthase activity as it is able to convert farnesyl diphosphate (FPP) into (E)-nerolidol. The protein is IDS-like terpene synthase 3 of Melampsora lini (Rust fungus).